The following is a 32-amino-acid chain: Cytochrome b6-f complex subunit 7 (32 aa).

The chain crosses the membrane as a helical span at residues 9–27 (AVVFWVLIPVGLAGGALLL).

Belongs to the PetM family. The 4 large subunits of the cytochrome b6-f complex are cytochrome b6, subunit IV (17 kDa polypeptide, PetD), cytochrome f and the Rieske protein, while the 4 small subunits are PetG, PetL, PetM and PetN. The complex functions as a dimer.

It localises to the cellular thylakoid membrane. Its function is as follows. Component of the cytochrome b6-f complex, which mediates electron transfer between photosystem II (PSII) and photosystem I (PSI), cyclic electron flow around PSI, and state transitions. This chain is Cytochrome b6-f complex subunit 7, found in Synechococcus sp. (strain CC9311).